The chain runs to 67 residues: Kappa-scoloptoxin(04)-Ssd1b (67 aa).

The N-terminal stretch at 1–24 is a signal peptide; it reads MKKTCVVSVFLVLLLLKFHDLSMG. Residues 25 to 36 constitute a propeptide that is removed on maturation; that stretch reads EEISPLKKVARR. Disulfide bonds link Cys-44–Cys-55 and Cys-49–Cys-62.

As to expression, expressed by the venom gland.

It is found in the secreted. This chain is Kappa-scoloptoxin(04)-Ssd1b, found in Scolopendra dehaani (Thai centipede).